Consider the following 624-residue polypeptide: LEAF RUST 10 DISEASE-RESISTANCE LOCUS RECEPTOR-LIKE PROTEIN KINASE-like 2.2 (624 aa).

An N-terminal signal peptide occupies residues 1–30 (MDYLSSMGSQTARFCLILLFLFYYLPCALS). Topologically, residues 31–263 (QDDLWGCGTP…IPNTRSILIT (233 aa)) are extracellular. Residues Asn45, Asn75, Asn85, Asn95, Asn150, and Asn164 are each glycosylated (N-linked (GlcNAc...) asparagine). The chain crosses the membrane as a helical span at residues 264–284 (IGQVVGFHVFIIVVMIIAFLF). Over 285-624 (WRRKKVNDLR…EEDSSIYSEV (340 aa)) the chain is Cytoplasmic. The region spanning 317–599 (KSFTEVVGRG…SLDPPPKPLL (283 aa)) is the Protein kinase domain. ATP is bound by residues 323 to 331 (VGRGGFGTV) and Lys345. The active-site Proton acceptor is the Asp434. The interval 587–624 (NLDSLDPPPKPLLHMPMQNNNAESSQPSEEDSSIYSEV) is disordered. A compositionally biased stretch (polar residues) spans 603–624 (MQNNNAESSQPSEEDSSIYSEV).

This sequence belongs to the protein kinase superfamily. Ser/Thr protein kinase family.

The protein localises to the membrane. It carries out the reaction L-seryl-[protein] + ATP = O-phospho-L-seryl-[protein] + ADP + H(+). The catalysed reaction is L-threonyl-[protein] + ATP = O-phospho-L-threonyl-[protein] + ADP + H(+). The protein is LEAF RUST 10 DISEASE-RESISTANCE LOCUS RECEPTOR-LIKE PROTEIN KINASE-like 2.2 of Arabidopsis thaliana (Mouse-ear cress).